We begin with the raw amino-acid sequence, 278 residues long: DNA oxidative demethylase ALKBH2 (278 aa).

A disordered region spans residues 1–49 (MDRFLVKGAVGSLKRRMEQEQTGGGPAGLAEEEGNSKKNPRRAAPGNGV). The short motif at 3 to 7 (RFLVK) is the PCNA-binding element. Residues 101 to 103 (FGK) and 121 to 123 (YTF) each bind substrate. Residues 151 to 256 (TFNFVLINRY…RVNLTFRKIL (106 aa)) form the Fe2OG dioxygenase domain. 2-oxoglutarate is bound by residues asparagine 158, tyrosine 160, and histidine 170. Fe cation-binding residues include histidine 170 and aspartate 172. Aspartate 173 serves as a coordination point for substrate. 2-oxoglutarate contacts are provided by histidine 235, arginine 247, threonine 251, and arginine 253. Fe cation is bound at residue histidine 235.

Belongs to the alkB family. In terms of assembly, interacts with PCNA homotrimer; this interaction is enhanced during the S-phase of the cell cycle. Interacts with nucleolar proteins NCL, UBTF and NPM1. Interacts with XRCC5-XRCC6 heterodimer. Requires Fe(2+) as cofactor.

The protein localises to the nucleus. The protein resides in the nucleolus. It is found in the nucleoplasm. The enzyme catalyses a methylated nucleobase within DNA + 2-oxoglutarate + O2 = a nucleobase within DNA + formaldehyde + succinate + CO2. The catalysed reaction is an N(1)-methyl-2'-deoxyadenosine in double-stranded DNA + 2-oxoglutarate + O2 = a 2'-deoxyadenosine in double-stranded DNA + formaldehyde + succinate + CO2 + H(+). It catalyses the reaction an N(1)-methyl-2'-deoxyadenosine in single-stranded DNA + 2-oxoglutarate + O2 = a 2'-deoxyadenosine in single-stranded DNA + formaldehyde + succinate + CO2 + H(+). It carries out the reaction an N(3)-methyl-2'-deoxycytidine in double-stranded DNA + 2-oxoglutarate + O2 = a 2'-deoxycytidine in double-stranded DNA + formaldehyde + succinate + CO2 + H(+). The enzyme catalyses an N(3)-methyl-2'-deoxycytidine in single-stranded DNA + 2-oxoglutarate + O2 = a 2'-deoxycytidine in single-stranded DNA + formaldehyde + succinate + CO2 + H(+). The catalysed reaction is a 1,N(6)-etheno-2'-deoxyadenosine in double-stranded DNA + 2-oxoglutarate + O2 + H2O = a 2'-deoxyadenosine in double-stranded DNA + glyoxal + succinate + CO2. It catalyses the reaction a 1,N(6)-etheno-2'-deoxyadenosine in single-stranded DNA + 2-oxoglutarate + O2 + H2O = a 2'-deoxyadenosine in single-stranded DNA + glyoxal + succinate + CO2. It carries out the reaction a 3,N(4)-etheno-2'-deoxycytidine in double-stranded DNA + 2-oxoglutarate + O2 + H2O = a 2'-deoxycytidine in double-stranded DNA + glyoxal + succinate + CO2. The enzyme catalyses a 3,N(4)-etheno-2'-deoxycytidine in single-stranded DNA + 2-oxoglutarate + O2 + H2O = a 2'-deoxycytidine in single-stranded DNA + glyoxal + succinate + CO2. The catalysed reaction is a 1,N(2)-etheno-2'-deoxyguanosine in double-stranded DNA + 2-oxoglutarate + O2 + H2O = a 2'-deoxyguanosine in double-stranded DNA + glyoxal + succinate + CO2. With respect to regulation, activated by ascorbate and magnesium ions. Its function is as follows. Dioxygenase that repairs alkylated nucleic acid bases by direct reversal oxidative dealkylation. Can process both double-stranded (ds) and single-stranded (ss) DNA substrates, with a strong preference for dsDNA. Uses molecular oxygen, 2-oxoglutarate and iron as cofactors to oxidize the alkyl groups that are subsequently released as aldehydes, regenerating the undamaged bases. Probes the base pair stability, locates a weakened base pair and flips the damaged base to accommodate the lesion in its active site for efficient catalysis. Repairs monoalkylated bases, specifically N1-methyladenine and N3-methylcytosine, as well as higher order alkyl adducts such as bases modified with exocyclic bridged adducts known as etheno adducts including 1,N6-ethenoadenine, 3,N4-ethenocytosine and 1,N2-ethenoguanine. Acts as a gatekeeper of genomic integrity under alkylation stress. Efficiently repairs alkylated lesions in ribosomal DNA (rDNA). These lesions can cause ss- and dsDNA strand breaks that severely impair rDNA transcription. In a response mechanism to DNA damage, associates with PCNA at replication forks to repair alkylated adducts prior to replication. In Bos taurus (Bovine), this protein is DNA oxidative demethylase ALKBH2 (ALKBH2).